Consider the following 78-residue polypeptide: MSEVLPYGDEKLSPYGDGGDVGQIFSCRLQDTNNFFGAGQNKRPPKLGQIGRSKRVVIEDDRIDDVLKNMTDKAPPGV.

Residues 41–68 (NKRPPKLGQIGRSKRVVIEDDRIDDVLK) are CAMK2 inhibitory domain.

The protein belongs to the CAMK2N family. In terms of assembly, interacts with CAMK2B; the presence of Ca(2+)/calmodulin increases the interaction but is not essential. Interacts with CAMK2A; this interaction requires CAMK2A activation by Ca(2+).

Its subcellular location is the synapse. The protein localises to the cell projection. It is found in the dendrite. It localises to the postsynaptic density. Functionally, potent and specific inhibitor of CaM-kinase II (CAMK2). Plays a role in the maintenance of long-term retrieval-induced memory in response to contextual fear. Modulates blood pressure and vascular reactivity via regulation of CAMK2 activity in addition to regulation of left ventricular mass. Mediates the NLRP3 inflammasome in cardiomyocytes via acting as an inhibitor of the MAPK14/p38 and MAPK8/JNK pathways, thereby regulating ventricular remodeling and cardiac rhythm post-myocardial infarction. Negatively effects insulin sensitivity and promotes lipid formation in adipose tissues independent of CAMK2 signaling. The protein is Calcium/calmodulin-dependent protein kinase II inhibitor 1 (CAMK2N1) of Homo sapiens (Human).